The chain runs to 344 residues: Fructose-1,6-bisphosphatase class 1 (344 aa).

Mg(2+)-binding residues include glutamate 91, aspartate 110, leucine 112, and aspartate 113. Substrate-binding positions include 113–116 and asparagine 200; that span reads DGSS. A Mg(2+)-binding site is contributed by glutamate 272.

This sequence belongs to the FBPase class 1 family. Homotetramer. It depends on Mg(2+) as a cofactor.

It is found in the cytoplasm. The catalysed reaction is beta-D-fructose 1,6-bisphosphate + H2O = beta-D-fructose 6-phosphate + phosphate. The protein operates within carbohydrate biosynthesis; Calvin cycle. The polypeptide is Fructose-1,6-bisphosphatase class 1 (Rhodopseudomonas palustris (strain BisB18)).